The primary structure comprises 640 residues: 1,4-alpha-glucan branching enzyme GlgB (640 aa).

Asp318 acts as the Nucleophile in catalysis. The active-site Proton donor is the Glu371.

It belongs to the glycosyl hydrolase 13 family. GlgB subfamily. In terms of assembly, monomer.

It carries out the reaction Transfers a segment of a (1-&gt;4)-alpha-D-glucan chain to a primary hydroxy group in a similar glucan chain.. Its pathway is glycan biosynthesis; glycogen biosynthesis. In terms of biological role, catalyzes the formation of the alpha-1,6-glucosidic linkages in glycogen by scission of a 1,4-alpha-linked oligosaccharide from growing alpha-1,4-glucan chains and the subsequent attachment of the oligosaccharide to the alpha-1,6 position. The protein is 1,4-alpha-glucan branching enzyme GlgB of Francisella tularensis subsp. holarctica (strain LVS).